The chain runs to 269 residues: Phosphatidylglycerol--prolipoprotein diacylglyceryl transferase (269 aa).

A run of 4 helical transmembrane segments spans residues 14-34, 49-69, 89-109, and 118-138; these read IVQIGGFAVRWYSLLILAGII, VAPEVLSDLVVWLVVGAIPMA, VFAIWEGGIAIHGAILGGLLA, and GYSLLTMIDLAAPGLILGQAI. Residue Arg140 participates in a 1,2-diacyl-sn-glycero-3-phospho-(1'-sn-glycerol) binding. A run of 3 helical transmembrane segments spans residues 180–200, 208–228, and 240–260; these read TFLYESLWNLGVLALLLFVFF, GSIACLYALAYSVGRFWIEGL, and TAQLVSLAGIVLGAVGLWWLN.

It belongs to the Lgt family.

It localises to the cell inner membrane. The catalysed reaction is L-cysteinyl-[prolipoprotein] + a 1,2-diacyl-sn-glycero-3-phospho-(1'-sn-glycerol) = an S-1,2-diacyl-sn-glyceryl-L-cysteinyl-[prolipoprotein] + sn-glycerol 1-phosphate + H(+). It participates in protein modification; lipoprotein biosynthesis (diacylglyceryl transfer). Functionally, catalyzes the transfer of the diacylglyceryl group from phosphatidylglycerol to the sulfhydryl group of the N-terminal cysteine of a prolipoprotein, the first step in the formation of mature lipoproteins. The protein is Phosphatidylglycerol--prolipoprotein diacylglyceryl transferase of Gloeobacter violaceus (strain ATCC 29082 / PCC 7421).